Consider the following 483-residue polypeptide: Altronate oxidoreductase (483 aa).

18–29 (IIQFGEGNFLRA) is an NAD(+) binding site.

Belongs to the mannitol dehydrogenase family. UxaB subfamily.

It carries out the reaction D-altronate + NAD(+) = keto-D-tagaturonate + NADH + H(+). Its pathway is carbohydrate metabolism; pentose and glucuronate interconversion. The sequence is that of Altronate oxidoreductase from Escherichia coli (strain 55989 / EAEC).